Consider the following 384-residue polypeptide: Flap endonuclease 1 (384 aa).

An N-domain region spans residues 1-105; the sequence is MGVKGLNQLI…GELEKRLLKR (105 aa). Asp-34 contacts Mg(2+). Residues Arg-47 and Arg-71 each coordinate DNA. Positions 87, 159, 161, 180, and 182 each coordinate Mg(2+). The tract at residues 123 to 254 is I-domain; the sequence is DMTKYQKRLV…VTAYKLIKEH (132 aa). Glu-159 provides a ligand contact to DNA. DNA-binding residues include Gly-232 and Asp-234. Mg(2+) is bound at residue Asp-234. The segment at 341–349 is interaction with PCNA; sequence IQGRLDGFF. Residues 354-384 are disordered; sequence KYSNTSPLGKDDKKRKTNDKKGAAAKKTKRR. Basic and acidic residues predominate over residues 362–375; that stretch reads GKDDKKRKTNDKKG.

The protein belongs to the XPG/RAD2 endonuclease family. FEN1 subfamily. In terms of assembly, interacts with PCNA. Three molecules of FEN1 bind to one PCNA trimer with each molecule binding to one PCNA monomer. PCNA stimulates the nuclease activity without altering cleavage specificity. It depends on Mg(2+) as a cofactor. Post-translationally, phosphorylated. Phosphorylation upon DNA damage induces relocalization to the nuclear plasma.

The protein resides in the nucleus. It localises to the nucleolus. The protein localises to the nucleoplasm. Its subcellular location is the mitochondrion. Its function is as follows. Structure-specific nuclease with 5'-flap endonuclease and 5'-3' exonuclease activities involved in DNA replication and repair. During DNA replication, cleaves the 5'-overhanging flap structure that is generated by displacement synthesis when DNA polymerase encounters the 5'-end of a downstream Okazaki fragment. It enters the flap from the 5'-end and then tracks to cleave the flap base, leaving a nick for ligation. Also involved in the long patch base excision repair (LP-BER) pathway, by cleaving within the apurinic/apyrimidinic (AP) site-terminated flap. Acts as a genome stabilization factor that prevents flaps from equilibrating into structures that lead to duplications and deletions. Also possesses 5'-3' exonuclease activity on nicked or gapped double-stranded DNA, and exhibits RNase H activity. Also involved in replication and repair of rDNA and in repairing mitochondrial DNA. The chain is Flap endonuclease 1 from Lodderomyces elongisporus (strain ATCC 11503 / CBS 2605 / JCM 1781 / NBRC 1676 / NRRL YB-4239) (Yeast).